The following is a 193-amino-acid chain: Probable GTP-binding protein EngB (193 aa).

The region spanning 22 to 193 (LLPEVALAGR…AAWEAIYRHL (172 aa)) is the EngB-type G domain. Residues 30-37 (GRSNVGKS), 57-61 (GKTQT), 75-78 (DVPG), 142-145 (TKLD), and 174-176 (FSS) each bind GTP. Residues S37 and T59 each contribute to the Mg(2+) site.

Belongs to the TRAFAC class TrmE-Era-EngA-EngB-Septin-like GTPase superfamily. EngB GTPase family. Requires Mg(2+) as cofactor.

In terms of biological role, necessary for normal cell division and for the maintenance of normal septation. This Exiguobacterium sibiricum (strain DSM 17290 / CCUG 55495 / CIP 109462 / JCM 13490 / 255-15) protein is Probable GTP-binding protein EngB.